A 755-amino-acid chain; its full sequence is Polycomb protein SUZ12 (755 aa).

Disordered regions lie at residues Lys-26–Ser-79, Asn-333–Ala-377, and Ala-392–Arg-420. Over residues Lys-30–Gln-42 the composition is skewed to low complexity. 2 stretches are compositionally biased toward polar residues: residues Thr-43 to Gly-57 and Thr-349 to Thr-359. Over residues Gly-411–Arg-420 the composition is skewed to basic and acidic residues. The C2H2-type zinc-finger motif lies at Phe-436–His-458. The polycomb protein VEFS-Box stretch occupies residues Ile-580–Ser-645.

Belongs to the VEFS (VRN2-EMF2-FIS2-SU(Z)12) family. In terms of assembly, component of the polycomb repressive complex 2 (PRC2) that consists of four core subunits icluding EZH2, EED, SUZ12, and RBBP4, among which EZH2 is the catalytic subunit and which minimally requires EED and SUZ12 for catalysis.

It localises to the nucleus. In terms of biological role, component of the of the Polycomb Repressive Complex 2 (PRC2), a histone H3 lysine methyltransferase responsible for generating mono-, di-, and tri-methylation on Lys27 (H3K27me1, H3K27me2 and H3K27me3). The tri-methylated form is known to be critical in gene repression, and its proper placement is essential in defining repression patterns during development. SUZ12 is not a catalytic subunit but is required for the complex regulation of histone H3 lysine methylation by EZH2. This is Polycomb protein SUZ12 from Chaetomium thermophilum (strain DSM 1495 / CBS 144.50 / IMI 039719) (Thermochaetoides thermophila).